We begin with the raw amino-acid sequence, 919 residues long: Puromycin-sensitive aminopeptidase (919 aa).

Residues glutamate 180 and 316-320 (GAMEN) contribute to the substrate site. Histidine 352 lines the Zn(2+) pocket. Catalysis depends on glutamate 353, which acts as the Proton acceptor. Zn(2+) is bound by residues histidine 356 and glutamate 375. Tyrosine 464 is modified (3'-nitrotyrosine). The short motif at 726 to 730 (RRRFK) is the Nuclear localization signal element.

Belongs to the peptidase M1 family. Monomer. It depends on Zn(2+) as a cofactor. Detected in liver, epithelium of renal tubules, epithelium of small and large intestine, gastric epithelial cells, and alveoli of the lung (at protein level).

The protein localises to the cytoplasm. Its subcellular location is the cytosol. It is found in the nucleus. The catalysed reaction is Release of an N-terminal amino acid, preferentially alanine, from a wide range of peptides, amides and arylamides.. With respect to regulation, strongly inhibited by bestatin, leuhistin, actinonin, amastatin, 1,10-phenanthroline, DFP, PCMBS, Zn(2+), Cd(2+), Co(2+), Cu(2+), Hg(2+), EDTA and puromycin. Not inhibited by PMSF, and only slightly inhibited by leupeptin and aprotinin. Activity is increased by Mg(2+) and Ca(2+). Functionally, aminopeptidase with broad substrate specificity for several peptides. Involved in proteolytic events essential for cell growth and viability. May act as regulator of neuropeptide activity. Plays a role in the antigen-processing pathway for MHC class I molecules. Involved in the N-terminal trimming of cytotoxic T-cell epitope precursors. Digests the poly-Q peptides found in many cellular proteins. Digests tau from normal brain more efficiently than tau from Alzheimer disease brain. The chain is Puromycin-sensitive aminopeptidase (NPEPPS) from Homo sapiens (Human).